The following is a 399-amino-acid chain: Nitric oxide reductase (399 aa).

The segment at 32 to 221 (HRGTTYNAYL…DEIQKINLAI (190 aa)) is zinc metallo-hydrolase. Fe cation-binding residues include histidine 81, glutamate 83, aspartate 85, histidine 148, aspartate 167, and histidine 228. A Flavodoxin-like domain is found at 255 to 394 (AVIAYDTMWL…RCYELGRKIA (140 aa)).

The protein in the N-terminal section; belongs to the zinc metallo-hydrolase group 3 family. As to quaternary structure, homodimer. FMN serves as cofactor. The cofactor is Fe cation.

Its function is as follows. Has nitric oxide reductase activity in combination with Hrb; probably involved in nitrosative stress protection. This Moorella thermoacetica (strain ATCC 39073 / JCM 9320) protein is Nitric oxide reductase (fprA).